Here is a 172-residue protein sequence, read N- to C-terminus: Gamma-crystallin-4 (172 aa).

Beta/gamma crystallin 'Greek key' domains follow at residues 1 to 37 and 38 to 80; these read IFFY…RVES and GNWI…RFIP. A connecting peptide region spans residues 81 to 85; sequence HPHSQ. Beta/gamma crystallin 'Greek key' domains are found at residues 86-126 and 127-169; these read YKMR…NVSD and GHWM…RRVH.

It belongs to the beta/gamma-crystallin family. Monomer.

Crystallins are the dominant structural components of the vertebrate eye lens. The chain is Gamma-crystallin-4 (cryg4) from Xenopus laevis (African clawed frog).